Reading from the N-terminus, the 472-residue chain is 3-isopropylmalate dehydratase large subunit (472 aa).

[4Fe-4S] cluster-binding residues include C346, C406, and C409.

It belongs to the aconitase/IPM isomerase family. LeuC type 1 subfamily. As to quaternary structure, heterodimer of LeuC and LeuD. The cofactor is [4Fe-4S] cluster.

The enzyme catalyses (2R,3S)-3-isopropylmalate = (2S)-2-isopropylmalate. It participates in amino-acid biosynthesis; L-leucine biosynthesis; L-leucine from 3-methyl-2-oxobutanoate: step 2/4. Functionally, catalyzes the isomerization between 2-isopropylmalate and 3-isopropylmalate, via the formation of 2-isopropylmaleate. The protein is 3-isopropylmalate dehydratase large subunit of Thermus thermophilus (strain ATCC BAA-163 / DSM 7039 / HB27).